The primary structure comprises 289 residues: MSGFSSEERAAPFTLEYRVFLKNEKGQYISPFHDVPIYADKDVFHMVVEVPRWSNAKMEIATKDPLNPIKQDVKKGKLRYVANLFPYKGYIWNYGAIPQTWEDPGHSDKHTGCCGDNDPIDVCEIGSKVCARGEIIRVKVLGILAMIDEGETDWKVIAINVDDPDAANYKDISDVERLKPGYLEATVDWFRRYKVPDGKPENEFAFNAEFKNKDFAVDIIKSTHDYWKALVTKKTDGKGISCMNTTVSESPFKCDPDAAKAIVDALPPPCESACSLPTDVDKWFHQQKN.

Residue Ser2 is modified to N-acetylserine. An N6-acetyllysine modification is found at Lys57. Residues Asp116, Asp121, and Asp153 each coordinate Mg(2+). Lys228 is subject to N6-acetyllysine. Ser250 carries the post-translational modification Phosphoserine.

The protein belongs to the PPase family. In terms of assembly, homodimer. Requires Mg(2+) as cofactor.

It localises to the cytoplasm. It catalyses the reaction diphosphate + H2O = 2 phosphate + H(+). In Mus musculus (Mouse), this protein is Inorganic pyrophosphatase (Ppa1).